The sequence spans 82 residues: uncharacterized protein (82 aa).

A disordered region spans residues 22–82 (LRRSRSSRNG…WPPPCAFTPG (61 aa)). Positions 47–58 (HRGEPGHPRMEE) are enriched in basic and acidic residues. Over residues 73-82 (WPPPCAFTPG) the composition is skewed to pro residues.

This is an uncharacterized protein from Homo sapiens (Human).